Consider the following 405-residue polypeptide: Threonine synthase (405 aa).

K104 is subject to N6-(pyridoxal phosphate)lysine. Residues N130, G231–N235, and T369 each bind pyridoxal 5'-phosphate.

The protein belongs to the threonine synthase family. Homotrimer. Pyridoxal 5'-phosphate is required as a cofactor.

The catalysed reaction is O-phospho-L-homoserine + H2O = L-threonine + phosphate. Its pathway is amino-acid biosynthesis; L-threonine biosynthesis; L-threonine from L-aspartate: step 5/5. Its function is as follows. Catalyzes the gamma-elimination of phosphate from L-phosphohomoserine and the beta-addition of water to produce L-threonine. Does not catalyze the conversion of O-acetyl-L-homoserine into threonine. This is Threonine synthase (thrC) from Methanosarcina acetivorans (strain ATCC 35395 / DSM 2834 / JCM 12185 / C2A).